Reading from the N-terminus, the 225-residue chain is Protein-L-isoaspartate O-methyltransferase (225 aa).

Ser-75 is an active-site residue.

It belongs to the methyltransferase superfamily. L-isoaspartyl/D-aspartyl protein methyltransferase family.

Its subcellular location is the cytoplasm. It catalyses the reaction [protein]-L-isoaspartate + S-adenosyl-L-methionine = [protein]-L-isoaspartate alpha-methyl ester + S-adenosyl-L-homocysteine. Catalyzes the methyl esterification of L-isoaspartyl residues in peptides and proteins that result from spontaneous decomposition of normal L-aspartyl and L-asparaginyl residues. It plays a role in the repair and/or degradation of damaged proteins. In Xylella fastidiosa (strain 9a5c), this protein is Protein-L-isoaspartate O-methyltransferase.